The chain runs to 337 residues: uncharacterized protein (337 aa).

The MurNAc-LAA domain maps to Ile-3–Asn-174.

To C.perfringens pIP404 ORF10.

This is an uncharacterized protein from Clostridium perfringens (strain 13 / Type A).